A 352-amino-acid chain; its full sequence is Holliday junction branch migration complex subunit RuvB (352 aa).

The interval Phe13 to Tyr201 is large ATPase domain (RuvB-L). ATP contacts are provided by residues Arg41, Gly82, Lys85, Thr86, Thr87, Glu148–Phe150, Arg191, Tyr201, and Arg238. Residue Thr86 coordinates Mg(2+). Residues Thr202 to Gln273 form a small ATPAse domain (RuvB-S) region. The interval Glu276–Phe352 is head domain (RuvB-H). 2 residues coordinate DNA: Arg330 and Arg335.

Belongs to the RuvB family. Homohexamer. Forms an RuvA(8)-RuvB(12)-Holliday junction (HJ) complex. HJ DNA is sandwiched between 2 RuvA tetramers; dsDNA enters through RuvA and exits via RuvB. An RuvB hexamer assembles on each DNA strand where it exits the tetramer. Each RuvB hexamer is contacted by two RuvA subunits (via domain III) on 2 adjacent RuvB subunits; this complex drives branch migration. In the full resolvosome a probable DNA-RuvA(4)-RuvB(12)-RuvC(2) complex forms which resolves the HJ.

The protein localises to the cytoplasm. The catalysed reaction is ATP + H2O = ADP + phosphate + H(+). Its function is as follows. The RuvA-RuvB-RuvC complex processes Holliday junction (HJ) DNA during genetic recombination and DNA repair, while the RuvA-RuvB complex plays an important role in the rescue of blocked DNA replication forks via replication fork reversal (RFR). RuvA specifically binds to HJ cruciform DNA, conferring on it an open structure. The RuvB hexamer acts as an ATP-dependent pump, pulling dsDNA into and through the RuvAB complex. RuvB forms 2 homohexamers on either side of HJ DNA bound by 1 or 2 RuvA tetramers; 4 subunits per hexamer contact DNA at a time. Coordinated motions by a converter formed by DNA-disengaged RuvB subunits stimulates ATP hydrolysis and nucleotide exchange. Immobilization of the converter enables RuvB to convert the ATP-contained energy into a lever motion, pulling 2 nucleotides of DNA out of the RuvA tetramer per ATP hydrolyzed, thus driving DNA branch migration. The RuvB motors rotate together with the DNA substrate, which together with the progressing nucleotide cycle form the mechanistic basis for DNA recombination by continuous HJ branch migration. Branch migration allows RuvC to scan DNA until it finds its consensus sequence, where it cleaves and resolves cruciform DNA. The polypeptide is Holliday junction branch migration complex subunit RuvB (Prochlorococcus marinus (strain MIT 9312)).